Reading from the N-terminus, the 94-residue chain is Large ribosomal subunit protein uL29 (94 aa).

The tract at residues 65–94 (ANPGERKSRVFSRAKRKKKNLARLSAKAKG) is disordered. Over residues 73–94 (RVFSRAKRKKKNLARLSAKAKG) the composition is skewed to basic residues.

Belongs to the universal ribosomal protein uL29 family.

The sequence is that of Large ribosomal subunit protein uL29 from Leptospira interrogans serogroup Icterohaemorrhagiae serovar copenhageni (strain Fiocruz L1-130).